A 178-amino-acid chain; its full sequence is Acireductone dioxygenase (178 aa).

Fe(2+) contacts are provided by His100, His102, Glu106, and His145. Ni(2+) is bound by residues His100, His102, Glu106, and His145.

Belongs to the acireductone dioxygenase (ARD) family. Monomer. The cofactor is Fe(2+). Requires Ni(2+) as cofactor.

It catalyses the reaction 1,2-dihydroxy-5-(methylsulfanyl)pent-1-en-3-one + O2 = 3-(methylsulfanyl)propanoate + CO + formate + 2 H(+). The enzyme catalyses 1,2-dihydroxy-5-(methylsulfanyl)pent-1-en-3-one + O2 = 4-methylsulfanyl-2-oxobutanoate + formate + 2 H(+). It participates in amino-acid biosynthesis; L-methionine biosynthesis via salvage pathway; L-methionine from S-methyl-5-thio-alpha-D-ribose 1-phosphate: step 5/6. In terms of biological role, catalyzes 2 different reactions between oxygen and the acireductone 1,2-dihydroxy-3-keto-5-methylthiopentene (DHK-MTPene) depending upon the metal bound in the active site. Fe-containing acireductone dioxygenase (Fe-ARD) produces formate and 2-keto-4-methylthiobutyrate (KMTB), the alpha-ketoacid precursor of methionine in the methionine recycle pathway. Ni-containing acireductone dioxygenase (Ni-ARD) produces methylthiopropionate, carbon monoxide and formate, and does not lie on the methionine recycle pathway. This is Acireductone dioxygenase from Bacillus velezensis (strain DSM 23117 / BGSC 10A6 / LMG 26770 / FZB42) (Bacillus amyloliquefaciens subsp. plantarum).